The chain runs to 198 residues: ATP-dependent Clp protease proteolytic subunit (198 aa).

Ser103 serves as the catalytic Nucleophile. His128 is an active-site residue.

The protein belongs to the peptidase S14 family. In terms of assembly, fourteen ClpP subunits assemble into 2 heptameric rings which stack back to back to give a disk-like structure with a central cavity, resembling the structure of eukaryotic proteasomes.

The protein resides in the cytoplasm. It catalyses the reaction Hydrolysis of proteins to small peptides in the presence of ATP and magnesium. alpha-casein is the usual test substrate. In the absence of ATP, only oligopeptides shorter than five residues are hydrolyzed (such as succinyl-Leu-Tyr-|-NHMec, and Leu-Tyr-Leu-|-Tyr-Trp, in which cleavage of the -Tyr-|-Leu- and -Tyr-|-Trp bonds also occurs).. Cleaves peptides in various proteins in a process that requires ATP hydrolysis. Has a chymotrypsin-like activity. Plays a major role in the degradation of misfolded proteins. The protein is ATP-dependent Clp protease proteolytic subunit of Vesicomyosocius okutanii subsp. Calyptogena okutanii (strain HA).